A 101-amino-acid polypeptide reads, in one-letter code: UPF0060 membrane protein ACIAD1364 (101 aa).

The next 3 helical transmembrane spans lie at 24-44 (WLWL…TLHP), 50-70 (IYAA…RFID), and 79-99 (IWGG…PQGL).

The protein belongs to the UPF0060 family.

Its subcellular location is the cell inner membrane. This Acinetobacter baylyi (strain ATCC 33305 / BD413 / ADP1) protein is UPF0060 membrane protein ACIAD1364.